The chain runs to 296 residues: F-box/LRR-repeat protein 15 (296 aa).

An F-box domain is found at 16–63; sequence LLDLPWEDVLVSHVFCHLPLRLLVSLQRVSKSFRSLIQVYLDNCRTFD. LRR repeat units follow at residues 138–159, 164–185, 190–211, 216–237, and 242–263; these read RLQH…RSLA, MLRS…CYLA, ELRA…EEVA, EMER…RTLA, and KLQS…GVLR.

The protein belongs to the FBXL15 family. Part of the SCF (SKP1-CUL1-F-box) E3 ubiquitin-protein ligase complex SCF(FBXL15).

It is found in the cytoplasm. It participates in protein modification; protein ubiquitination. In terms of biological role, substrate recognition component of a SCF (SKP1-CUL1-F-box protein) E3 ubiquitin-protein ligase complex which mediates the ubiquitination and subsequent proteasomal degradation of target proteins. Acts as a positive regulator of the BMP signaling pathway. Required for dorsal/ventral pattern formation. The chain is F-box/LRR-repeat protein 15 (fbxl15) from Danio rerio (Zebrafish).